Consider the following 188-residue polypeptide: MVIGVLALQGAFIEHQKSLAACGVDSIQVRKPHQLEDIQGLIIPGGESTTMGKLMNQFELFEPIVEKAHNGLPLFGTCAGMIMLAKDIAGSTQPRLGLMDIEVERNAFGRQVESFETELTISELGEAPVRAVFIRAPYIKSVAANVKVLAKYNEKIVLAQQDHYLVAAFHPELTNDVRLHQHFLKMIK.

An L-glutamine-binding site is contributed by 46 to 48 (GES). Cys-78 serves as the catalytic Nucleophile. L-glutamine is bound by residues Arg-105 and 134–135 (IR). Residues His-170 and Glu-172 each act as charge relay system in the active site.

It belongs to the glutaminase PdxT/SNO family. In terms of assembly, in the presence of PdxS, forms a dodecamer of heterodimers. Only shows activity in the heterodimer.

The catalysed reaction is aldehydo-D-ribose 5-phosphate + D-glyceraldehyde 3-phosphate + L-glutamine = pyridoxal 5'-phosphate + L-glutamate + phosphate + 3 H2O + H(+). It carries out the reaction L-glutamine + H2O = L-glutamate + NH4(+). It participates in cofactor biosynthesis; pyridoxal 5'-phosphate biosynthesis. Functionally, catalyzes the hydrolysis of glutamine to glutamate and ammonia as part of the biosynthesis of pyridoxal 5'-phosphate. The resulting ammonia molecule is channeled to the active site of PdxS. The chain is Pyridoxal 5'-phosphate synthase subunit PdxT from Desulforamulus reducens (strain ATCC BAA-1160 / DSM 100696 / MI-1) (Desulfotomaculum reducens).